A 235-amino-acid chain; its full sequence is Glycerol-3-phosphate acyltransferase (235 aa).

Helical transmembrane passes span Leu4 to Gly24, Ala56 to Phe76, Val90 to Ala110, Phe126 to Val146, Val152 to Phe172, and Ile191 to Ile211.

This sequence belongs to the PlsY family. Probably interacts with PlsX.

The protein resides in the cell inner membrane. The enzyme catalyses an acyl phosphate + sn-glycerol 3-phosphate = a 1-acyl-sn-glycero-3-phosphate + phosphate. The protein operates within lipid metabolism; phospholipid metabolism. Catalyzes the transfer of an acyl group from acyl-phosphate (acyl-PO(4)) to glycerol-3-phosphate (G3P) to form lysophosphatidic acid (LPA). This enzyme utilizes acyl-phosphate as fatty acyl donor, but not acyl-CoA or acyl-ACP. This chain is Glycerol-3-phosphate acyltransferase, found in Prosthecochloris aestuarii (strain DSM 271 / SK 413).